Reading from the N-terminus, the 859-residue chain is Leucine--tRNA ligase (859 aa).

Residues 42-52 carry the 'HIGH' region motif; sequence PYPSGRLHMGH. The 'KMSKS' region motif lies at 618–622; the sequence is KMSKS. Lys621 serves as a coordination point for ATP.

It belongs to the class-I aminoacyl-tRNA synthetase family.

Its subcellular location is the cytoplasm. The enzyme catalyses tRNA(Leu) + L-leucine + ATP = L-leucyl-tRNA(Leu) + AMP + diphosphate. This is Leucine--tRNA ligase from Shewanella sp. (strain MR-7).